The following is a 389-amino-acid chain: Succinate--CoA ligase [ADP-forming] subunit beta (389 aa).

In terms of domain architecture, ATP-grasp spans 9-236 (KELFAKHNVP…KDATDPLELK (228 aa)). Residues Lys45, 52 to 54 (GRG), Ser94, and Glu99 contribute to the ATP site. Mg(2+) is bound by residues Asn191 and Asp205. Substrate contacts are provided by residues Asn256 and 318–320 (GIT).

It belongs to the succinate/malate CoA ligase beta subunit family. As to quaternary structure, heterotetramer of two alpha and two beta subunits. Requires Mg(2+) as cofactor.

It catalyses the reaction succinate + ATP + CoA = succinyl-CoA + ADP + phosphate. The catalysed reaction is GTP + succinate + CoA = succinyl-CoA + GDP + phosphate. It functions in the pathway carbohydrate metabolism; tricarboxylic acid cycle; succinate from succinyl-CoA (ligase route): step 1/1. Functionally, succinyl-CoA synthetase functions in the citric acid cycle (TCA), coupling the hydrolysis of succinyl-CoA to the synthesis of either ATP or GTP and thus represents the only step of substrate-level phosphorylation in the TCA. The beta subunit provides nucleotide specificity of the enzyme and binds the substrate succinate, while the binding sites for coenzyme A and phosphate are found in the alpha subunit. This chain is Succinate--CoA ligase [ADP-forming] subunit beta, found in Mycobacteroides abscessus (strain ATCC 19977 / DSM 44196 / CCUG 20993 / CIP 104536 / JCM 13569 / NCTC 13031 / TMC 1543 / L948) (Mycobacterium abscessus).